Here is a 319-residue protein sequence, read N- to C-terminus: Biotin synthase (319 aa).

The 227-residue stretch at 41-267 (YKGNKVKVCS…TPDIMICGGR (227 aa)) folds into the Radical SAM core domain. [4Fe-4S] cluster contacts are provided by Cys59, Cys63, and Cys66. Residue Cys192 coordinates [2Fe-2S] cluster.

Belongs to the radical SAM superfamily. Biotin synthase family. As to quaternary structure, homodimer. It depends on [4Fe-4S] cluster as a cofactor. The cofactor is [2Fe-2S] cluster.

It carries out the reaction (4R,5S)-dethiobiotin + (sulfur carrier)-SH + 2 reduced [2Fe-2S]-[ferredoxin] + 2 S-adenosyl-L-methionine = (sulfur carrier)-H + biotin + 2 5'-deoxyadenosine + 2 L-methionine + 2 oxidized [2Fe-2S]-[ferredoxin]. It participates in cofactor biosynthesis; biotin biosynthesis; biotin from 7,8-diaminononanoate: step 2/2. Catalyzes the conversion of dethiobiotin (DTB) to biotin by the insertion of a sulfur atom into dethiobiotin via a radical-based mechanism. In Endomicrobium trichonymphae, this protein is Biotin synthase.